Reading from the N-terminus, the 993-residue chain is UPF0182 protein MAP_3291c (993 aa).

7 helical membrane-spanning segments follow: residues 18–38 (ILIL…RLID), 63–83 (FVVF…GLAV), 113–133 (LVSV…AQSY), 175–195 (FVAV…FGGI), 210–230 (IQLV…YWLD), 254–274 (AVLP…AAVF), and 287–307 (IGLV…PLIV). A disordered region spans residues 903-941 (NIQPTEGGAPAASPPANAPAPAVTPGSAPPVAAPPVPDG). The span at 929–939 (SAPPVAAPPVP) shows a compositional bias: pro residues.

Belongs to the UPF0182 family.

The protein localises to the cell membrane. The chain is UPF0182 protein MAP_3291c from Mycolicibacterium paratuberculosis (strain ATCC BAA-968 / K-10) (Mycobacterium paratuberculosis).